Consider the following 427-residue polypeptide: Isocitrate lyase (427 aa).

89 to 91 (SGW) contributes to the substrate binding site. D150 provides a ligand contact to Mg(2+). C188 (proton acceptor) is an active-site residue. Substrate is bound by residues 189–190 (GH), R225, 310–314 (NCSPS), and T344.

Belongs to the isocitrate lyase/PEP mutase superfamily. Isocitrate lyase family. In terms of assembly, homotetramer. Mg(2+) serves as cofactor.

The catalysed reaction is D-threo-isocitrate = glyoxylate + succinate. The protein operates within carbohydrate metabolism; glyoxylate cycle; (S)-malate from isocitrate: step 1/2. Its function is as follows. Involved in the metabolic adaptation in response to environmental changes. Catalyzes the reversible formation of succinate and glyoxylate from isocitrate, a key step of the glyoxylate cycle, which operates as an anaplerotic route for replenishing the tricarboxylic acid cycle during growth on fatty acid substrates. This Halalkalibacterium halodurans (strain ATCC BAA-125 / DSM 18197 / FERM 7344 / JCM 9153 / C-125) (Bacillus halodurans) protein is Isocitrate lyase (aceA).